Reading from the N-terminus, the 505-residue chain is 2,3-bisphosphoglycerate-independent phosphoglycerate mutase (505 aa).

The Mn(2+) site is built by D12 and S62. S62 acts as the Phosphoserine intermediate in catalysis. Residues H123, 153 to 154 (RD), R185, R191, 257 to 260 (RPDR), and K330 contribute to the substrate site. Mn(2+)-binding residues include D397, H401, D438, H439, and H456.

Belongs to the BPG-independent phosphoglycerate mutase family. As to quaternary structure, monomer. Mn(2+) is required as a cofactor.

It catalyses the reaction (2R)-2-phosphoglycerate = (2R)-3-phosphoglycerate. It functions in the pathway carbohydrate degradation; glycolysis; pyruvate from D-glyceraldehyde 3-phosphate: step 3/5. Catalyzes the interconversion of 2-phosphoglycerate and 3-phosphoglycerate. The chain is 2,3-bisphosphoglycerate-independent phosphoglycerate mutase from Staphylococcus aureus (strain COL).